The following is a 1039-amino-acid chain: Kinesin-like protein KIN-5B (1039 aa).

The Kinesin motor domain occupies 48–390 (NVQVILRCKP…LDYAYRAKNI (343 aa)). ATP is bound at residue 134–141 (GQTGTGKT). A disordered region spans residues 1008–1039 (TLSEEHTSLEKISTKQGLGEANNRTPFLEVNK). Residues 1010-1020 (SEEHTSLEKIS) show a composition bias toward basic and acidic residues.

Belongs to the TRAFAC class myosin-kinesin ATPase superfamily. Kinesin family. KIN-5/BimC subfamily.

It is found in the cytoplasm. The protein resides in the cytoskeleton. Its subcellular location is the spindle. Its function is as follows. Responsible for microtubule translocation. May be important for the organization of phragmoplast-specific arrays of microtubules. Plays an essential role in stabilizing the mitotic spindle. Required during mitotic cytokinesis. This is Kinesin-like protein KIN-5B from Arabidopsis thaliana (Mouse-ear cress).